A 317-amino-acid chain; its full sequence is Pantothenate kinase (317 aa).

99 to 106 (GSVSVGKS) provides a ligand contact to ATP.

It belongs to the prokaryotic pantothenate kinase family.

The protein resides in the cytoplasm. The catalysed reaction is (R)-pantothenate + ATP = (R)-4'-phosphopantothenate + ADP + H(+). It functions in the pathway cofactor biosynthesis; coenzyme A biosynthesis; CoA from (R)-pantothenate: step 1/5. The polypeptide is Pantothenate kinase (Mannheimia succiniciproducens (strain KCTC 0769BP / MBEL55E)).